Consider the following 518-residue polypeptide: Adenine deaminase (518 aa).

It belongs to the metallo-dependent hydrolases superfamily. Adenine deaminase family. Mn(2+) is required as a cofactor.

It catalyses the reaction adenine + H2O + H(+) = hypoxanthine + NH4(+). The sequence is that of Adenine deaminase from Methanoculleus marisnigri (strain ATCC 35101 / DSM 1498 / JR1).